The sequence spans 150 residues: Small ribosomal subunit protein uS15 (150 aa).

The interval 1-22 (MNKRREKGQSHSTRPPHPQPPQ) is disordered.

This sequence belongs to the universal ribosomal protein uS15 family. In terms of assembly, part of the 30S ribosomal subunit.

The sequence is that of Small ribosomal subunit protein uS15 from Aeropyrum pernix (strain ATCC 700893 / DSM 11879 / JCM 9820 / NBRC 100138 / K1).